Here is a 64-residue protein sequence, read N- to C-terminus: Potassium channel toxin kappa-KTx 4.1 (64 aa).

An N-terminal signal peptide occupies residues 1–26 (MKSTLMTASLLILVVLFIIDYASVYA). A propeptide spanning residues 27 to 38 (EFIDGEISLERE) is cleaved from the precursor. Cystine bridges form between cysteine 43–cysteine 61 and cysteine 47–cysteine 57.

Belongs to the short scorpion toxin superfamily. Potassium channel inhibitor kappa-KTx family. Kappa-KTx 4 subfamily. As to expression, expressed by the venom gland.

The protein resides in the secreted. In terms of biological role, potassium channel inhibitor (Kv). This Heterometrus petersii (Asian forest scorpion) protein is Potassium channel toxin kappa-KTx 4.1.